The primary structure comprises 85 residues: uncharacterized protein (85 aa).

Residues Asp-64–His-76 show a composition bias toward basic and acidic residues. Positions Asp-64–Ser-85 are disordered.

This is an uncharacterized protein from Mycobacterium bovis (strain ATCC BAA-935 / AF2122/97).